A 263-amino-acid chain; its full sequence is MSYYIPPKVWSAEESNQGKFSAINRPTAGSRFDQKLPQGDKPLQVYSLGTPNGLKVAVMLEELRELGVKEADYDLFKISIMDGDQFGSDFVAINPNSKIPSLLDKSNREAIRVFESGSILLYLADKFNHLIPVDWAQRTEVLNWLFWQMGAAPFVGGGFGHFFSYAPEKLEYPINRFTMETKRQLDLLNKELANKPYIAGEDYTIADIAIWSWYGRLAQDALYEGAYKFLALGTYQHLLDWTERIAQRPAVKRALEVDYKAIK.

Residues 44-131 (QVYSLGTPNG…YLADKFNHLI (88 aa)) enclose the GST N-terminal domain. The 130-residue stretch at 134-263 (DWAQRTEVLN…ALEVDYKAIK (130 aa)) folds into the GST C-terminal domain.

Belongs to the GST superfamily. In terms of assembly, homodimer.

This is an uncharacterized protein from Streptococcus mutans serotype c (strain ATCC 700610 / UA159).